A 425-amino-acid chain; its full sequence is Glutamate-1-semialdehyde 2,1-aminomutase (425 aa).

N6-(pyridoxal phosphate)lysine is present on K265.

Belongs to the class-III pyridoxal-phosphate-dependent aminotransferase family. HemL subfamily. As to quaternary structure, homodimer. Requires pyridoxal 5'-phosphate as cofactor.

The protein localises to the cytoplasm. It carries out the reaction (S)-4-amino-5-oxopentanoate = 5-aminolevulinate. It functions in the pathway porphyrin-containing compound metabolism; protoporphyrin-IX biosynthesis; 5-aminolevulinate from L-glutamyl-tRNA(Glu): step 2/2. The sequence is that of Glutamate-1-semialdehyde 2,1-aminomutase from Psychromonas ingrahamii (strain DSM 17664 / CCUG 51855 / 37).